We begin with the raw amino-acid sequence, 228 residues long: DNA mismatch repair protein MutH (228 aa).

This sequence belongs to the MutH family.

The protein resides in the cytoplasm. Sequence-specific endonuclease that cleaves unmethylated GATC sequences. It is involved in DNA mismatch repair. The protein is DNA mismatch repair protein MutH of Yersinia pseudotuberculosis serotype O:1b (strain IP 31758).